We begin with the raw amino-acid sequence, 419 residues long: MSRDVSPLPLICFLLGIPRSGTTLLAHLLQQHPDITAPPEPWLMLALEAFGRVDHRHPAGASLIQVAACEFLGRIDRISVSRVFADAAYSQYLAAAGKRTLIDKTPRYWMVLDYLHSLYPEAPHILLLRNPYAIAASLKSTWGVPFVSERCPPTSVSCLAELVTGTPTAAVALALADLVLGLPALAMQRGRRHTQVVRYERLVERPDEEIQRVIAGLGYDPAGIVFAGVEQTEYLRLSSFGDRRLLKKKAVDNRSVETWRTELTIEEMQTVTDLVGADLLVELGYEQSLQHARDAGIVDRGKAVTERYRRVFQTWWDLRRGEGEGIPAGACEYNSIFQQAEEDNTISSSSSTLGEAQRLPEFKLGENLQLGASMVAQLKRALMASEDDRATQLEALRNRDAAIEALRREVVRLEQSLTK.

Its function is as follows. Required for the formation of sulfated nod factor. Proposed to transfer activated sulfate (PAPS) to the fucose of the nod factor. The sequence is that of Nodulation protein NoeE (noeE) from Sinorhizobium fredii (strain NBRC 101917 / NGR234).